Consider the following 356-residue polypeptide: Ion-translocating oxidoreductase complex subunit D (356 aa).

Transmembrane regions (helical) follow at residues 20–40 (LMLLVVYATIPGMFTMTWFFG), 42–62 (GVLVNVLLASISCMLFEALAI), 68–88 (PVGFYLRDFSALVTGVLIGVS), and 117–137 (GFNPFNPAMVAYALLLVSFPV). T177 is subject to FMN phosphoryl threonine. 5 helical membrane passes run 205-225 (WASAGWEWVNIAFLFGGLYLL), 229-249 (VYTWHAPVSMLLALALMAALF), 259-279 (GSPLFHLLTGATMLGAFFIVT), 292-312 (VIYGALIGMLVYVIRTWGSSY), and 315-335 (GVAFAVLLMNFAAPFIDYYTT).

The protein belongs to the NqrB/RnfD family. The complex is composed of six subunits: RnfA, RnfB, RnfC, RnfD, RnfE and RnfG. Requires FMN as cofactor.

The protein localises to the cell inner membrane. Functionally, part of a membrane-bound complex that couples electron transfer with translocation of ions across the membrane. This chain is Ion-translocating oxidoreductase complex subunit D, found in Cellvibrio japonicus (strain Ueda107) (Pseudomonas fluorescens subsp. cellulosa).